We begin with the raw amino-acid sequence, 403 residues long: Interferon-induced protein with tetratricopeptide repeats 3 (403 aa).

4 TPR repeats span residues 94 to 127, 136 to 169, 172 to 206, and 241 to 274; these read LVTW…CQKF, PELE…KPKD, CSSG…NPQN, and TDVL…TVNN.

Belongs to the IFIT family. Component of an interferon-dependent multiprotein complex, at least composed of IFIT1, IFIT2 and IFIT3. Interacts with IFIT1 and IFIT2. Interacts (via N-terminus) with MAVS, TBK1, TRAF6 and RIGI. Interacts with COPS5.

Its subcellular location is the cytoplasm. The protein localises to the mitochondrion. Its function is as follows. IFN-induced antiviral protein which acts as an inhibitor of cellular as well as viral processes, cell migration, proliferation, signaling, and viral replication. Enhances MAVS-mediated host antiviral responses by serving as an adapter bridging TBK1 to MAVS which leads to the activation of TBK1 and phosphorylation of IRF3 and phosphorylated IRF3 translocates into nucleus to promote antiviral gene transcription. Exhibits an antiproliferative activity via the up-regulation of cell cycle negative regulators CDKN1A/p21 and CDKN1B/p27. Normally, CDKN1B/p27 turnover is regulated by COPS5, which binds CDKN1B/p27 in the nucleus and exports it to the cytoplasm for ubiquitin-dependent degradation. IFIT3 sequesters COPS5 in the cytoplasm, thereby increasing nuclear CDKN1B/p27 protein levels. Up-regulates CDKN1A/p21 by down-regulating MYC, a repressor of CDKN1A/p21. Can negatively regulate the apoptotic effects of IFIT2. In Mus musculus (Mouse), this protein is Interferon-induced protein with tetratricopeptide repeats 3 (Ifit3).